We begin with the raw amino-acid sequence, 230 residues long: Small ribosomal subunit protein uS7m (230 aa).

It belongs to the universal ribosomal protein uS7 family. In terms of assembly, part of the small ribosomal subunit.

The protein resides in the mitochondrion. In terms of biological role, one of the primary rRNA binding proteins, it binds directly to 18S rRNA where it nucleates assembly of the head domain of the small subunit. This Marchantia polymorpha (Common liverwort) protein is Small ribosomal subunit protein uS7m (RPS7).